The chain runs to 185 residues: Adenine phosphoribosyltransferase (185 aa).

The protein belongs to the purine/pyrimidine phosphoribosyltransferase family.

It is found in the cytoplasm. The enzyme catalyses AMP + diphosphate = 5-phospho-alpha-D-ribose 1-diphosphate + adenine. It functions in the pathway purine metabolism; AMP biosynthesis via salvage pathway; AMP from adenine: step 1/1. Catalyzes a salvage reaction resulting in the formation of AMP, that is energically less costly than de novo synthesis. This Caenorhabditis elegans protein is Adenine phosphoribosyltransferase (aprt-1).